The following is a 425-amino-acid chain: MLDLKRIRNNPEEIKKLLSNRGEDFDVAVIDEIVTLDEERRKILVEVESLKSKRNQVSAEIPKLKKAGEDVTEIMNDMRKLGEEIKNFDTRVNEINERIEYIMLRIPNIPNPEVPDGETDEDNVEIKKWGEPTKFNFEPKAHWDLGTDLNILDFERGGKVAGSRFTVYKGLGARLERSIINYFLDKHTTENGYTEILPPYMVNRDSMTGTGQLPKFEEDAFKVENNGYFLIPTAEVPVTNMYRNEVLSGDILPIKHAAYSACFRAEAGSAGRDTRGLVRQHQFNKVELVKFCKPEDSYAELDKLVEDAESVLQGLGLPYRIVRICKGDLGFTAALKYDIEVWMPSYNRYVEISSCSNFEDFQARRANIKYRETPKDKPKFIHTLNGSGVAIGRTVAAVLENYQKEDGTVEIPEAIKRFMNVDFIK.

233 to 235 contributes to the L-serine binding site; the sequence is TAE. 264–266 contributes to the ATP binding site; it reads RAE. Residue E287 coordinates L-serine. 351-354 contacts ATP; the sequence is EISS. S387 contributes to the L-serine binding site.

Belongs to the class-II aminoacyl-tRNA synthetase family. Type-1 seryl-tRNA synthetase subfamily. As to quaternary structure, homodimer. The tRNA molecule binds across the dimer.

It is found in the cytoplasm. It carries out the reaction tRNA(Ser) + L-serine + ATP = L-seryl-tRNA(Ser) + AMP + diphosphate + H(+). It catalyses the reaction tRNA(Sec) + L-serine + ATP = L-seryl-tRNA(Sec) + AMP + diphosphate + H(+). The protein operates within aminoacyl-tRNA biosynthesis; selenocysteinyl-tRNA(Sec) biosynthesis; L-seryl-tRNA(Sec) from L-serine and tRNA(Sec): step 1/1. Its function is as follows. Catalyzes the attachment of serine to tRNA(Ser). Is also able to aminoacylate tRNA(Sec) with serine, to form the misacylated tRNA L-seryl-tRNA(Sec), which will be further converted into selenocysteinyl-tRNA(Sec). The protein is Serine--tRNA ligase of Clostridium botulinum (strain Eklund 17B / Type B).